The following is a 153-amino-acid chain: ATP synthase subunit b' (153 aa).

A helical transmembrane segment spans residues 23–40 (LMAIQVVALTYILNSLFF).

This sequence belongs to the ATPase B chain family. F-type ATPases have 2 components, F(1) - the catalytic core - and F(0) - the membrane proton channel. F(1) has five subunits: alpha(3), beta(3), gamma(1), delta(1), epsilon(1). F(0) has four main subunits: a(1), b(1), b'(1) and c(10-14). The alpha and beta chains form an alternating ring which encloses part of the gamma chain. F(1) is attached to F(0) by a central stalk formed by the gamma and epsilon chains, while a peripheral stalk is formed by the delta, b and b' chains.

The protein localises to the cellular thylakoid membrane. In terms of biological role, f(1)F(0) ATP synthase produces ATP from ADP in the presence of a proton or sodium gradient. F-type ATPases consist of two structural domains, F(1) containing the extramembraneous catalytic core and F(0) containing the membrane proton channel, linked together by a central stalk and a peripheral stalk. During catalysis, ATP synthesis in the catalytic domain of F(1) is coupled via a rotary mechanism of the central stalk subunits to proton translocation. Component of the F(0) channel, it forms part of the peripheral stalk, linking F(1) to F(0). The b'-subunit is a diverged and duplicated form of b found in plants and photosynthetic bacteria. The chain is ATP synthase subunit b' from Prochlorococcus marinus (strain MIT 9301).